The chain runs to 451 residues: Tubulin alpha-1 chain (451 aa).

Gln11 is a binding site for GTP. Lys40 is modified (N6-acetyllysine). The GTP site is built by Glu71, Gly144, Thr145, Thr179, Asn206, and Asn228. Residue Glu71 participates in Mg(2+) binding. Glu254 is a catalytic residue.

Belongs to the tubulin family. In terms of assembly, dimer of alpha and beta chains. A typical microtubule is a hollow water-filled tube with an outer diameter of 25 nm and an inner diameter of 15 nM. Alpha-beta heterodimers associate head-to-tail to form protofilaments running lengthwise along the microtubule wall with the beta-tubulin subunit facing the microtubule plus end conferring a structural polarity. Microtubules usually have 13 protofilaments but different protofilament numbers can be found in some organisms and specialized cells. Mg(2+) is required as a cofactor. Undergoes a tyrosination/detyrosination cycle, the cyclic removal and re-addition of a C-terminal tyrosine residue by the enzymes tubulin tyrosine carboxypeptidase (TTCP) and tubulin tyrosine ligase (TTL), respectively. Post-translationally, acetylation of alpha chains at Lys-40 stabilizes microtubules and affects affinity and processivity of microtubule motors. This modification has a role in multiple cellular functions, ranging from cell motility, cell cycle progression or cell differentiation to intracellular trafficking and signaling.

It is found in the cytoplasm. Its subcellular location is the cytoskeleton. The catalysed reaction is GTP + H2O = GDP + phosphate + H(+). Tubulin is the major constituent of microtubules, a cylinder consisting of laterally associated linear protofilaments composed of alpha- and beta-tubulin heterodimers. Microtubules grow by the addition of GTP-tubulin dimers to the microtubule end, where a stabilizing cap forms. Below the cap, tubulin dimers are in GDP-bound state, owing to GTPase activity of alpha-tubulin. The chain is Tubulin alpha-1 chain (TUBA1) from Zea mays (Maize).